We begin with the raw amino-acid sequence, 905 residues long: Protein translocase subunit SecA (905 aa).

ATP-binding positions include Gln89, Gly107 to Thr111, and Asp502. Positions 887, 889, 898, and 899 each coordinate Zn(2+).

It belongs to the SecA family. As to quaternary structure, monomer and homodimer. Part of the essential Sec protein translocation apparatus which comprises SecA, SecYEG and auxiliary proteins SecDF-YajC and YidC. Requires Zn(2+) as cofactor.

The protein resides in the cell inner membrane. It is found in the cytoplasm. It carries out the reaction ATP + H2O + cellular proteinSide 1 = ADP + phosphate + cellular proteinSide 2.. In terms of biological role, part of the Sec protein translocase complex. Interacts with the SecYEG preprotein conducting channel. Has a central role in coupling the hydrolysis of ATP to the transfer of proteins into and across the cell membrane, serving both as a receptor for the preprotein-SecB complex and as an ATP-driven molecular motor driving the stepwise translocation of polypeptide chains across the membrane. This Rhizobium leguminosarum bv. trifolii (strain WSM2304) protein is Protein translocase subunit SecA.